A 705-amino-acid chain; its full sequence is Elongation factor G (705 aa).

Residues 8–290 form the tr-type G domain; sequence ERYRNFGIMA…GVVHLLPSPA (283 aa). GTP is bound by residues 17-24, 88-92, and 142-145; these read AHIDAGKT, DTPGH, and NKMD. The tract at residues 290-309 is disordered; sequence ADRPPVQGIDENEKEDTRDA.

The protein belongs to the TRAFAC class translation factor GTPase superfamily. Classic translation factor GTPase family. EF-G/EF-2 subfamily.

It is found in the cytoplasm. Functionally, catalyzes the GTP-dependent ribosomal translocation step during translation elongation. During this step, the ribosome changes from the pre-translocational (PRE) to the post-translocational (POST) state as the newly formed A-site-bound peptidyl-tRNA and P-site-bound deacylated tRNA move to the P and E sites, respectively. Catalyzes the coordinated movement of the two tRNA molecules, the mRNA and conformational changes in the ribosome. In Xanthomonas campestris pv. campestris (strain 8004), this protein is Elongation factor G.